Here is a 1227-residue protein sequence, read N- to C-terminus: Pentatricopeptide repeat-containing protein At5g15280, mitochondrial (1227 aa).

Residues 1–31 (MLNLLSISSSSRLRFLNKVSSLTYHYSFAFF) constitute a mitochondrion transit peptide. PPR repeat units follow at residues 146 to 180 (LPQACEIMASMLIREGMVKEVELLLMEMERHGDTM), 182 to 216 (NEGIFCDLIGKYVDDFDSRKAVMLFDWMRRKGLVP), 217 to 251 (LTSCYQILIDQLVRVHRTESAYRICLDWVETRAEL), 255 to 289 (NIDSIGKVIELLCLDQKVQEARVLARKLVALGCIL), 290 to 320 (NSSIYSKITIGYNEKQDFEDLLSFIGEVKYE), 322 to 356 (DVFVGNRILHSLCRRFGSERAYVYMEELEHLGFKQ), 357 to 391 (DEVTFGILIGWCCYEGDIKRAVLYLSEIMSKGYKP), 392 to 426 (DVYSYNAILSGLFRKGLWQHTHCILDEMKENGMML), 427 to 461 (SLSTFKIMVTGYCKARQFEEAKRIVNKMFGYGLIE), 527 to 561 (VLPEFNSLIVRASEDGDLQTALRLLDEMARWGQKL), 562 to 597 (SRRSFAVLMRSLCASRAHLRVSISLLEKWPKLAYQL), 598 to 632 (DGETLNFLVQEYCKKGFSRHSKLIFHKMVQMHHPI), 633 to 667 (DNVTYTSLIRCFCKKETLNDLLNVWGAAQNDNWLP), 668 to 698 (DLNDCGDLWNCLVRKGLVEEVVQLFERVFIS), 703 to 737 (QSEACRIFVEKLTVLGFSCIAHSVVKRLEGEGCIV), 738 to 772 (EQEVYNHLIKGLCTEKKDSAAFAILDEMLDKKHIP), 773 to 800 (SLGSCLMLIPRLCRANKAGTAFNLAEQI), 802 to 836 (SSYVHYALIKGLSLAGKMLDAENQLRIMLSNGLSS), 837 to 871 (YNKIYNVMFQGYCKGNNWMKVEEVLGLMVRKNIIC), 872 to 906 (SVKSYREYVRKMCLEPQSLSAISLKEFLLLGESNP), 908 to 942 (GVIIYNMLIFYMFRAKNHLEVNKVLLEMQGRGVLP), 943 to 977 (DETTFNFLVHGYSSSADYSSSLRYLSAMISKGMKP), 978 to 1012 (NNRSLRAVTSSLCDNGDVKKALDLWQVMESKGWNL), 1014 to 1044 (SSVVQTKIVETLISKGEIPKAEDFLTRVTRN), 1047 to 1081 (MAPNYDNIIKKLSDRGNLDIAVHLLNTMLKNQSIP), 1082 to 1116 (GSSSYDSVINGLLRYNQLDKAMDFHTEMVELGLSP), 1117 to 1151 (SISTWSGLVHKFCEACQVLESERLIKSMVGLGESP), and 1152 to 1186 (SQEMFKTVIDRFRVEKNTVKASEMMEMMQKCGYEV).

Belongs to the PPR family. P subfamily.

It localises to the mitochondrion. The protein is Pentatricopeptide repeat-containing protein At5g15280, mitochondrial of Arabidopsis thaliana (Mouse-ear cress).